Consider the following 259-residue polypeptide: Glutamate racemase (259 aa).

Residues 7–8 and 39–40 each bind substrate; these read DS and YG. Cysteine 70 (proton donor/acceptor) is an active-site residue. 71-72 is a substrate binding site; sequence NT. Catalysis depends on cysteine 180, which acts as the Proton donor/acceptor. 181 to 182 lines the substrate pocket; the sequence is TH.

The protein belongs to the aspartate/glutamate racemases family.

The enzyme catalyses L-glutamate = D-glutamate. It participates in cell wall biogenesis; peptidoglycan biosynthesis. Provides the (R)-glutamate required for cell wall biosynthesis. The polypeptide is Glutamate racemase (Persephonella marina (strain DSM 14350 / EX-H1)).